The chain runs to 281 residues: Probable feruloyl esterase A (281 aa).

A signal peptide spans Met1–Ala21. 3 disulfides stabilise this stretch: Cys50-Cys279, Cys112-Cys115, and Cys248-Cys255. Asp98 is a binding site for substrate. Asn100 carries N-linked (GlcNAc...) asparagine glycosylation. Tyr101 serves as a coordination point for substrate. The active-site Nucleophile is the Ser154. N-linked (GlcNAc...) asparagine glycosylation occurs at Asn173. The active-site Charge relay system is Asp215. His268 contributes to the substrate binding site. His268 serves as the catalytic Charge relay system.

The protein belongs to the AB hydrolase superfamily. FaeA family.

It is found in the secreted. The enzyme catalyses feruloyl-polysaccharide + H2O = ferulate + polysaccharide.. Involved in degradation of plant cell walls. Hydrolyzes the feruloyl-arabinose ester bond in arabinoxylans, and the feruloyl-galactose ester bond in pectin. The sequence is that of Probable feruloyl esterase A (faeA) from Aspergillus terreus (strain NIH 2624 / FGSC A1156).